A 354-amino-acid chain; its full sequence is DNA integrity scanning protein DisA (354 aa).

The DAC domain maps to 6–144 (DDELKKILKI…GDIKYVLRDS (139 aa)). Residues G73, L91, and 104–108 (TRHRT) each bind ATP.

The protein belongs to the DisA family. Homooctamer. Mg(2+) serves as cofactor.

It catalyses the reaction 2 ATP = 3',3'-c-di-AMP + 2 diphosphate. Its function is as follows. Participates in a DNA-damage check-point that is active prior to asymmetric division when DNA is damaged. DisA forms globular foci that rapidly scan along the chromosomes during sporulation, searching for lesions. When a lesion is present, DisA pauses at the lesion site. This triggers a cellular response that culminates in a temporary block in sporulation initiation. Also has diadenylate cyclase activity, catalyzing the condensation of 2 ATP molecules into cyclic di-AMP (c-di-AMP). c-di-AMP acts as a signaling molecule that couples DNA integrity with progression of sporulation. The rise in c-di-AMP level generated by DisA while scanning the chromosome, operates as a positive signal that advances sporulation; upon encountering a lesion, the DisA focus arrests at the damaged site and halts c-di-AMP synthesis. This is DNA integrity scanning protein DisA from Clostridium perfringens (strain 13 / Type A).